We begin with the raw amino-acid sequence, 104 residues long: Complex III assembly factor LYRM7 (104 aa).

Phosphoserine is present on Ser-60.

It belongs to the complex I LYR family. As to quaternary structure, interacts with UQCRFS1.

The protein localises to the mitochondrion matrix. Assembly factor required for Rieske Fe-S protein UQCRFS1 incorporation into the cytochrome b-c1 (CIII) complex. Functions as a chaperone, binding to this subunit within the mitochondrial matrix and stabilizing it prior to its translocation and insertion into the late CIII dimeric intermediate within the mitochondrial inner membrane. The chain is Complex III assembly factor LYRM7 (Lyrm7) from Mus musculus (Mouse).